The chain runs to 27 residues: Cysteine-rich venom protein tropirin (27 aa).

This sequence belongs to the CRISP family. Post-translationally, contains 8 disulfide bonds. Expressed by the venom gland.

Its subcellular location is the secreted. Functionally, blocks contraction of smooth muscle elicited by high potassium-induced depolarization, but does not block caffeine-stimulated contraction. May target voltage-gated calcium channels on smooth muscle. In Tropidechis carinatus (Australian rough-scaled snake), this protein is Cysteine-rich venom protein tropirin.